The chain runs to 447 residues: ATP-dependent protease ATPase subunit HslU (447 aa).

ATP-binding positions include Ile-18, 60–65 (GVGKTE), Asp-259, Glu-325, and Arg-397.

This sequence belongs to the ClpX chaperone family. HslU subfamily. A double ring-shaped homohexamer of HslV is capped on each side by a ring-shaped HslU homohexamer. The assembly of the HslU/HslV complex is dependent on binding of ATP.

Its subcellular location is the cytoplasm. Its function is as follows. ATPase subunit of a proteasome-like degradation complex; this subunit has chaperone activity. The binding of ATP and its subsequent hydrolysis by HslU are essential for unfolding of protein substrates subsequently hydrolyzed by HslV. HslU recognizes the N-terminal part of its protein substrates and unfolds these before they are guided to HslV for hydrolysis. This chain is ATP-dependent protease ATPase subunit HslU, found in Burkholderia cenocepacia (strain HI2424).